Consider the following 379-residue polypeptide: MGCFGSAGAKGDAEENKKRKEANKNINKQIQKDKQVYRATHRLLLLGAGESGKSTIVKQMRILHVDGFSEEEKREKIHAIRCNIRDAILTITGNMSTLTPPIALENPAHQFRVDYIQDVASQKDFDYPEEFYEHTEMLWKDKGVQACYERANEYQLIDCAKYFLDRVHIVRQTDYTPTEQDILRCRVLTLGIFETRFQVDKVNFHMFDVGGQRDERRKWIQCFNDVTAIIFVTACSSYNMVLREDPSQNRLRESLDLFKSIWNNRWLRTISVILFLNKQDLLAEKIRAGKSKLEDYFPDFARYQTPLDATVEPGEDPEVVRAKYFIRDEFLRISTASGDGKHYCYPHFTCAVDTENIRRVFNDCRDIIQRMHLRQYELL.

The segment at 1 to 29 (MGCFGSAGAKGDAEENKKRKEANKNINKQ) is disordered. A lipid anchor (N-palmitoyl glycine) is attached at Gly2. The S-palmitoyl cysteine moiety is linked to residue Cys3. The G-alpha domain occupies 39 to 379 (ATHRLLLLGA…RMHLRQYELL (341 aa)). Residues 42–55 (RLLLLGAGESGKST) are G1 motif. GTP-binding positions include 47-54 (GAGESGKS), 183-189 (LRCRVLT), 208-212 (DVGGQ), 277-280 (NKQD), and Ala351. Mg(2+) contacts are provided by Ser54 and Thr189. The G2 motif stretch occupies residues 181-189 (DILRCRVLT). The segment at 204-213 (FHMFDVGGQR) is G3 motif. Residues 273-280 (ILFLNKQD) are G4 motif. Residues 349–354 (TCAVDT) are G5 motif.

Belongs to the G-alpha family. G(s) subfamily. G proteins are composed of 3 units; alpha, beta and gamma. The alpha chain contains the guanine nucleotide binding site.

In terms of biological role, guanine nucleotide-binding proteins (G proteins) are involved as modulators or transducers in various transmembrane signaling systems. The G(s) protein is involved in hormonal regulation of adenylate cyclase: it activates the cyclase in response to beta-adrenergic stimuli. The chain is Guanine nucleotide-binding protein G(s) subunit alpha from Homarus americanus (American lobster).